Here is a 158-residue protein sequence, read N- to C-terminus: Transcription elongation factor GreA (158 aa).

This sequence belongs to the GreA/GreB family.

Functionally, necessary for efficient RNA polymerase transcription elongation past template-encoded arresting sites. The arresting sites in DNA have the property of trapping a certain fraction of elongating RNA polymerases that pass through, resulting in locked ternary complexes. Cleavage of the nascent transcript by cleavage factors such as GreA or GreB allows the resumption of elongation from the new 3'terminus. GreA releases sequences of 2 to 3 nucleotides. This chain is Transcription elongation factor GreA, found in Agrobacterium fabrum (strain C58 / ATCC 33970) (Agrobacterium tumefaciens (strain C58)).